A 726-amino-acid chain; its full sequence is ORC ubiquitin ligase 1 (726 aa).

The RING-type; degenerate zinc-finger motif lies at 18 to 56 (CHICLGKVRQPVICINNHVFCSICIDLWLKNNSQCPACR). Coiled-coil stretches lie at residues 87–129 (LRKT…TILD) and 155–270 (ETVA…MNSI). Residue S210 is modified to Phosphoserine. 2 disordered regions span residues 276–334 (SADG…TSKA) and 436–460 (NVSNKDSSEDDISRSENEKKSECFS). Residues 280-290 (KGSKGSEEDVV) are compositionally biased toward basic and acidic residues. Positions 304-318 (SSTSSSSHLAKPSSS) are enriched in low complexity. Positions 319–334 (RLCDTSSARQESTSKA) are enriched in polar residues. A compositionally biased stretch (basic and acidic residues) spans 446–457 (DISRSENEKKSE). Residues S526, S553, S561, S568, and S570 each carry the phosphoserine modification. Disordered regions lie at residues 570 to 602 (SSQGSEFLEEPDKLEEKTELNLSKGSLTNDQLE) and 687 to 726 (QSPWSTSFVPEKRNKNVNQSTKRKIQSSLSSASPSKATKS). The span at 579 to 588 (EPDKLEEKTE) shows a compositional bias: basic and acidic residues. The span at 589–602 (LNLSKGSLTNDQLE) shows a compositional bias: polar residues. Residues 713–726 (SSLSSASPSKATKS) are compositionally biased toward low complexity. 2 positions are modified to phosphoserine: S719 and S721.

In terms of assembly, associates with ORC complex. Binds to chromatin; association is cell cycle-regulated, absent from mitotic chromosomes, is associated with chromatin from G1 and partially released from chromatin from mid S-phase. Post-translationally, auto-ubiquitinated.

It localises to the chromosome. It carries out the reaction S-ubiquitinyl-[E2 ubiquitin-conjugating enzyme]-L-cysteine + [acceptor protein]-L-lysine = [E2 ubiquitin-conjugating enzyme]-L-cysteine + N(6)-ubiquitinyl-[acceptor protein]-L-lysine.. In terms of biological role, E3 ubiquitin ligase essential for DNA replication origin activation during S phase. Acts as a replication origin selector which selects the origins to be fired and catalyzes the multi-mono-ubiquitination of a subset of chromatin-bound ORC3 and ORC5 during S-phase. This chain is ORC ubiquitin ligase 1, found in Homo sapiens (Human).